The sequence spans 205 residues: MAASTASHRPIKGILKNKTSSTSSRVASAEQPRGSVDEELSKKSQKWDEMNILATYHPADKDYGLMKIDEPSTPYHSMIGDDDDAYSDTETTEAMTPDTLAKKLAAAEGSEPKYRIREQESSGEEDSDLSPEEREKKRQFEMKRKLHYNEGLNIKLARQLISKDLHDDEEDEEMSETADGESMNTEESNQGSTPSDQRQNKSQSS.

Disordered regions lie at residues 1–46 (MAAS…KSQK) and 64–205 (GLMK…SQSS). A2 carries the post-translational modification N-acetylalanine. Required for binding PPP1CC stretches follow at residues 12-17 (KGILKN) and 43-55 (KSQKWDEMNILAT). Positions 17–26 (NKTSSTSSRV) are enriched in polar residues. The segment covering 35 to 46 (SVDEELSKKSQK) has biased composition (basic and acidic residues). At S44 the chain carries Phosphoserine; by ATM. Position 73 is a phosphothreonine; by GSK3 (T73). A compositionally biased stretch (acidic residues) spans 80 to 91 (GDDDDAYSDTET). S87 bears the Phosphoserine mark. Residues T89, T92, and T96 each carry the phosphothreonine modification. The segment covering 110–120 (SEPKYRIREQE) has biased composition (basic and acidic residues). Phosphoserine occurs at positions 121, 122, 127, and 130. Over residues 121 to 130 (SSGEEDSDLS) the composition is skewed to acidic residues. Residues 131–143 (PEEREKKRQFEMK) show a composition bias toward basic and acidic residues. Residues 147 to 150 (HYNE) are required for binding PPP1CC catalytic center, displacing metal ions and inhibition of PPP1CC catalytic activity. Over residues 167–179 (DDEEDEEMSETAD) the composition is skewed to acidic residues. Residues 182-205 (SMNTEESNQGSTPSDQRQNKSQSS) are compositionally biased toward polar residues.

This sequence belongs to the protein phosphatase inhibitor 2 family. As to quaternary structure, heterodimer with PP1. Post-translationally, phosphorylation on Ser-44 by ATM activates PP1 by dissociating the PP1-PPP1R2 complex. Phosphorylation on Thr-73 by GSK3 activates PP1 by dissociating the PP1-PPP1R2 complex.

Functionally, inhibitor of protein-phosphatase 1. In Oryctolagus cuniculus (Rabbit), this protein is Protein phosphatase inhibitor 2 (PPP1R2).